The chain runs to 124 residues: UPF0102 protein Mmc1_3298 (124 aa).

It belongs to the UPF0102 family.

The polypeptide is UPF0102 protein Mmc1_3298 (Magnetococcus marinus (strain ATCC BAA-1437 / JCM 17883 / MC-1)).